The sequence spans 317 residues: Metaxin-1 (317 aa).

Residues Lys38, Lys41, and Lys78 each participate in a glycyl lysine isopeptide (Lys-Gly) (interchain with G-Cter in ubiquitin) cross-link. Residues 164-184 (EELEKELYQEARECLTLLSQR) traverse the membrane as a helical segment.

This sequence belongs to the metaxin family. As to quaternary structure, interacts with MTX2/metaxin-2. Associates with the mitochondrial contact site and cristae organizing system (MICOS) complex, composed of at least MICOS10/MIC10, CHCHD3/MIC19, CHCHD6/MIC25, APOOL/MIC27, IMMT/MIC60, APOO/MIC23/MIC26 and QIL1/MIC13. This complex was also known under the names MINOS or MitOS complex. The MICOS complex associates with mitochondrial outer membrane proteins SAMM50, MTX1 and MTX2 (together described as components of the mitochondrial outer membrane sorting assembly machinery (SAM) complex) and DNAJC11, mitochondrial inner membrane protein TMEM11 and with HSPA9. The MICOS and SAM complexes together with DNAJC11 are part of a large protein complex spanning both membranes termed the mitochondrial intermembrane space bridging (MIB) complex. Interacts with ARMC1. Post-translationally, ubiquitinated by PRKN during mitophagy, leading to its degradation and enhancement of mitophagy. Deubiquitinated by USP30.

The protein resides in the mitochondrion outer membrane. Involved in transport of proteins into the mitochondrion. Essential for embryonic development. In Sus scrofa (Pig), this protein is Metaxin-1 (MTX1).